A 500-amino-acid chain; its full sequence is Glycerol kinase (500 aa).

Threonine 16 contributes to the ADP binding site. Residues threonine 16 and threonine 17 each coordinate ATP. Threonine 16 lines the sn-glycerol 3-phosphate pocket. Arginine 20 contributes to the ADP binding site. Residues arginine 86, glutamate 87, tyrosine 138, and aspartate 243 each coordinate sn-glycerol 3-phosphate. The glycerol site is built by arginine 86, glutamate 87, tyrosine 138, aspartate 243, and glutamine 244. Positions 265 and 313 each coordinate ADP. ATP-binding residues include threonine 265, glycine 313, glutamine 317, and glycine 414. ADP-binding residues include glycine 414 and asparagine 418.

Belongs to the FGGY kinase family.

The catalysed reaction is glycerol + ATP = sn-glycerol 3-phosphate + ADP + H(+). The protein operates within polyol metabolism; glycerol degradation via glycerol kinase pathway; sn-glycerol 3-phosphate from glycerol: step 1/1. Its activity is regulated as follows. Inhibited by fructose 1,6-bisphosphate (FBP). Functionally, key enzyme in the regulation of glycerol uptake and metabolism. Catalyzes the phosphorylation of glycerol to yield sn-glycerol 3-phosphate. In Trichormus variabilis (strain ATCC 29413 / PCC 7937) (Anabaena variabilis), this protein is Glycerol kinase.